A 173-amino-acid polypeptide reads, in one-letter code: Lipoprotein signal peptidase (173 aa).

The next 4 membrane-spanning stretches (helical) occupy residues 24-44, 55-75, 80-100, and 105-125; these read PWLGLGVIWILLDQLTKIAIL, ITGFFNLVLAYNRGAAFSFLA, WQRWFFTGLGVAAALFIVWLL, and GQKLFCFALALILGGALGNVI. Catalysis depends on residues D135 and D153. Residues 145–165 form a helical membrane-spanning segment; the sequence is HWPAFNVADCGICIGAVLLII.

It belongs to the peptidase A8 family.

It is found in the cell inner membrane. The catalysed reaction is Release of signal peptides from bacterial membrane prolipoproteins. Hydrolyzes -Xaa-Yaa-Zaa-|-(S,diacylglyceryl)Cys-, in which Xaa is hydrophobic (preferably Leu), and Yaa (Ala or Ser) and Zaa (Gly or Ala) have small, neutral side chains.. Its pathway is protein modification; lipoprotein biosynthesis (signal peptide cleavage). Its function is as follows. This protein specifically catalyzes the removal of signal peptides from prolipoproteins. The sequence is that of Lipoprotein signal peptidase from Ralstonia nicotianae (strain ATCC BAA-1114 / GMI1000) (Ralstonia solanacearum).